We begin with the raw amino-acid sequence, 705 residues long: FAD-dependent monooxygenase ATEG_03635 (705 aa).

FAD-binding positions include 86 to 115 (DVLI…IVDK), V208, 308 to 310 (RFY), and S408.

It belongs to the PheA/TfdB FAD monooxygenase family. It depends on FAD as a cofactor.

The protein operates within secondary metabolite biosynthesis. FAD-dependent monooxygenase; part of the cluster A that mediates the biosynthesis of azasperpyranones, members of the azaphilone family that exhibit anti-cancer activities. Azasperpyranones are synthesized by 2 clusters, A and B. Cluster A is responsible for the production of the polyhydric phenol moiety while the azaphilonoid scaffold is produced by the cluster B. The non-reducing polyketide synthase ATEG_03629 produces 5-methyl orsellinic acid, which is then reduced to 5-methyl orsellinic aldehyde by the NRPS-like protein ATEG_03630. 5-methyl orsellinic aldehyde is then first hydroxylated by the FAD-dependent monooxygenase ATEG_03635 and subsequently hydroxylated by the cytochrome P450 monooxygenase ATEG_03631 to produce the unstable polyhydric phenol precursor of azasperpyranones. On the other hand, the polyketide synthase ATEG_07659 is responsible for producing the 3,5-dimethyloctadienone moiety from acetyl-CoA, three malonyl-CoA, and two S-adenosyl methionines (SAM). The 3,5-dimethyloctadienone moiety is then loaded onto the SAT domain of ATEG_07661 and extended with four malonyl-CoA and one SAM, which leads to the formation of 2,4-dihydroxy-6-(5,7-dimethyl-2-oxo-trans-3-trans-5-nonadienyl)-3-methylbenzaldehyde (compound 8) after reductive release and aldol condensation. The FAD-dependent monooxygenase ATEG_07662 is the next enzyme in the biosynthesis sequence and hydroxylates the side chain at the benzylic position of compound 8. In Aspergillus nidulans, afoF, the ortholog of the FAD-dependent oxygenase ATEG_07660, is the key enzyme for the biosynthesis of asperfuranone by catalyzing the hydroxylation at C-8 of to prevent the formation of a six-membered ring hemiacetal intermediate and thus facilitating the formation of a five-membered ring to produce asperfuranone. In Aspergillus terreus, ATEG_07660 is probably not functional, which leads to the formation of the six-membered ring hemiacetal intermediate presperpyranone instead of asperfuranone. Finally, ATEG_03636 is involved in the condensation of the polyhydric phenol moiety produced by cluster A and the perasperpyranone precursor produced by cluster B, to yield azasperpyranone A. Further modifications of azasperpyranone A result in the production of derivatives, including azasperpyranone B to F. This chain is FAD-dependent monooxygenase ATEG_03635, found in Aspergillus terreus (strain NIH 2624 / FGSC A1156).